The primary structure comprises 1263 residues: Condensin complex subunit dpy-26 (1263 aa).

A compositionally biased stretch (polar residues) spans 1-10 (MDVPSSSNVT). A disordered region spans residues 1–29 (MDVPSSSNVTGRRKRQVLDDDEDDGFRST). Residues 691 to 725 (NEQMDETEVEERNEQDVQRELEDIALAADEVAELM) are a coiled coil. Disordered regions lie at residues 1098 to 1118 (YQAADERPNNQPTTSTYGTAN) and 1225 to 1263 (FSNLMRRPKAVPVRKGRGAGGQPTTSDLGAIVEEEEMEE). Residues 1106–1118 (NNQPTTSTYGTAN) are compositionally biased toward polar residues. A compositionally biased stretch (basic residues) spans 1230–1241 (RRPKAVPVRKGR).

As to quaternary structure, component of the condensin I complex, which contains the mix-1/SMC2 and smc-4/SMC4 heterodimer, and three non SMC subunits that probably regulate the complex: dpy-26, capg-1 and dpy-28. Within the complex, interacts with dpy-28, mix-1, smc-4 and capg-1. Component of the dosage compensation complex, which consists of the condensin I-like components mix-1/SMC2 and dpy-27/SMC4, and the three non SMC subunits dpy-26, capg-1 and dpy-28. Within the complex, interacts with dpy-27, dpy-28, mix-1 and capg-1. The interaction with dpy-27 is required for dpy-27 protein stability. Interacts with smcl-1. In terms of tissue distribution, expressed in embryos and in somatic and germline tissues in L4 stage larvae (at protein level).

It localises to the nucleus. It is found in the chromosome. Required for both chromosome condensation and segregation and for X-chromosome dosage compensation depending on its binding partners. Member of the condensin I complex, a complex required for conversion of interphase chromatin into mitotic-like condense chromosomes and for proper chromosome segregation in mitosis and meiosis. As a member of the condensin I complex, further controls the crossover number and distribution in meiosis by restricting double strand break formation, probably by influencing higher-order chromosome structure. Plays a role in robust cytokinesis upon presence of chromatin obstructions. Also a member of the condensin I-like dosage compensation complex that associates specifically with hermaphrodite X chromosomes to reduce their gene transcription during interphase, possibly through chromatin reorganization. As a member of the dosage compensation complex, also binds to regulatory regions of the autosomal her-1 gene, required for male development, possibly contributing to its repression in hermaphrodites. The chain is Condensin complex subunit dpy-26 from Caenorhabditis elegans.